The following is a 275-amino-acid chain: 2,3,4,5-tetrahydropyridine-2,6-dicarboxylate N-succinyltransferase (275 aa).

Substrate contacts are provided by Arg-106 and Asp-143.

It belongs to the transferase hexapeptide repeat family. As to quaternary structure, homotrimer.

Its subcellular location is the cytoplasm. The enzyme catalyses (S)-2,3,4,5-tetrahydrodipicolinate + succinyl-CoA + H2O = (S)-2-succinylamino-6-oxoheptanedioate + CoA. Its pathway is amino-acid biosynthesis; L-lysine biosynthesis via DAP pathway; LL-2,6-diaminopimelate from (S)-tetrahydrodipicolinate (succinylase route): step 1/3. The protein is 2,3,4,5-tetrahydropyridine-2,6-dicarboxylate N-succinyltransferase of Burkholderia pseudomallei (strain 1106a).